A 678-amino-acid polypeptide reads, in one-letter code: Catalase (678 aa).

A compositionally biased stretch (basic and acidic residues) spans 1-26 (MSNEREMQNKKDQQLESFRVEDEGKK). Positions 1–32 (MSNEREMQNKKDQQLESFRVEDEGKKLTTNQG) are disordered. Catalysis depends on residues His-75 and Asn-148. Residue Tyr-362 participates in heme binding.

It belongs to the catalase family. HPII subfamily. Requires heme as cofactor.

The protein localises to the cytoplasm. The enzyme catalyses 2 H2O2 = O2 + 2 H2O. Functionally, decomposes hydrogen peroxide into water and oxygen; serves to protect cells from the toxic effects of hydrogen peroxide. In Alkalihalophilus pseudofirmus (strain ATCC BAA-2126 / JCM 17055 / OF4) (Bacillus pseudofirmus), this protein is Catalase (katE).